The following is a 311-amino-acid chain: RNA polymerase sigma factor SigA4 (311 aa).

Residues 78–148 (MLKANLRLVV…TRAIDNHART (71 aa)) form a sigma-70 factor domain-2 region. Positions 102-105 (DLIQ) match the Interaction with polymerase core subunit RpoC motif. The segment at 157 to 234 (EKISRIKKMT…DPKSLEPMDA (78 aa)) is sigma-70 factor domain-3. Residues 247–304 (WLAHLTEREQQVLQLRFGLHDGEQHTLAEIGRRLNVSRERIRQVEARALQKLRVLSQQ) form a sigma-70 factor domain-4 region. The segment at residues 273–292 (LAEIGRRLNVSRERIRQVEA) is a DNA-binding region (H-T-H motif).

It belongs to the sigma-70 factor family.

It is found in the cytoplasm. Its function is as follows. Sigma factors are initiation factors that promote the attachment of RNA polymerase to specific initiation sites and are then released. This is RNA polymerase sigma factor SigA4 (sigA4) from Synechococcus elongatus (strain ATCC 33912 / PCC 7942 / FACHB-805) (Anacystis nidulans R2).